A 483-amino-acid chain; its full sequence is Iroquois-class homeodomain protein IRX-5 (483 aa).

A DNA-binding region (homeobox; TALE-type) is located at residues 113–175 (DPAYRKNATR…NARRRLKKEN (63 aa)). Disordered stretches follow at residues 177–392 (MTWT…QCPF) and 423–442 (GHPGPGPGPTTGPGSHFNGL). Over residues 186–203 (EDEEEEENIDLEKNDEDE) the composition is skewed to acidic residues. 2 stretches are compositionally biased toward basic and acidic residues: residues 204 to 213 (PQKPEDKGDP) and 250 to 261 (SDFKEPPSEGRL). Low complexity-rich tracts occupy residues 266 to 282 (GPPRTGGPSPAGPAAAR) and 374 to 388 (SRASPAPAPSRSPSA). Ser274 carries the post-translational modification Phosphoserine. The residue at position 464 (Ser464) is a Phosphoserine.

The protein belongs to the TALE/IRO homeobox family.

It localises to the nucleus. Its function is as follows. Establishes the cardiac repolarization gradient by its repressive actions on the KCND2 potassium-channel gene. Required for retinal cone bipolar cell differentiation. May regulate contrast adaptation in the retina and control specific aspects of visual function in circuits of the mammalian retina. Could be involved in the regulation of both the cell cycle and apoptosis in prostate cancer cells. Involved in craniofacial and gonadal development. Modulates the migration of progenitor cell populations in branchial arches and gonads by repressing CXCL12. This is Iroquois-class homeodomain protein IRX-5 (IRX5) from Homo sapiens (Human).